A 181-amino-acid polypeptide reads, in one-letter code: Ribonuclease HII (181 aa).

The region spanning 1–181 (MICGIDEVGR…SLHRKSFRLI (181 aa)) is the RNase H type-2 domain. Residues aspartate 6, glutamate 7, and aspartate 98 each coordinate a divalent metal cation.

This sequence belongs to the RNase HII family. Mn(2+) is required as a cofactor. The cofactor is Mg(2+).

Its subcellular location is the cytoplasm. It catalyses the reaction Endonucleolytic cleavage to 5'-phosphomonoester.. Functionally, endonuclease that specifically degrades the RNA of RNA-DNA hybrids. This chain is Ribonuclease HII, found in Borrelia recurrentis (strain A1).